The chain runs to 309 residues: 2-phospho-L-lactate transferase (309 aa).

7,8-didemethyl-8-hydroxy-5-deazariboflavin is bound by residues aspartate 48 and lysine 87.

Belongs to the CofD family. Homodimer. It depends on Mg(2+) as a cofactor.

It catalyses the reaction (2S)-lactyl-2-diphospho-5'-guanosine + 7,8-didemethyl-8-hydroxy-5-deazariboflavin = oxidized coenzyme F420-0 + GMP + H(+). Its pathway is cofactor biosynthesis; coenzyme F420 biosynthesis. Functionally, catalyzes the transfer of the 2-phospholactate moiety from (2S)-lactyl-2-diphospho-5'-guanosine to 7,8-didemethyl-8-hydroxy-5-deazariboflavin (FO) with the formation of oxidized coenzyme F420-0 and GMP. This chain is 2-phospho-L-lactate transferase, found in Methanosarcina barkeri (strain Fusaro / DSM 804).